The sequence spans 332 residues: NADH-quinone oxidoreductase subunit H (332 aa).

A run of 9 helical transmembrane segments spans residues 16–36 (VFFGLGALLLLVVLGFVTYAI), 87–107 (YVLAPIIAFTPSFMVLAALPF), 116–136 (IGVGLLYYIAVSGLTTIGVVT), 164–184 (LVMSALGVVLLAGSMNLVDIV), 190–210 (VWFIFAQPLAFLIFFIAAVAE), 231–251 (VEYSGFRWAFFMLAEYVYLFA), 253–273 (AALITILFLGGWHPVAFLGWI), 277–297 (VWFALKFCAIVYVLIWFRATF), and 312–332 (VLLPLSLVNIVLTAVIKSLFF).

It belongs to the complex I subunit 1 family. As to quaternary structure, NDH-1 is composed of 14 different subunits. Subunits NuoA, H, J, K, L, M, N constitute the membrane sector of the complex.

It localises to the cell membrane. It carries out the reaction a quinone + NADH + 5 H(+)(in) = a quinol + NAD(+) + 4 H(+)(out). Functionally, NDH-1 shuttles electrons from NADH, via FMN and iron-sulfur (Fe-S) centers, to quinones in the respiratory chain. The immediate electron acceptor for the enzyme in this species is believed to be ubiquinone. Couples the redox reaction to proton translocation (for every two electrons transferred, four hydrogen ions are translocated across the cytoplasmic membrane), and thus conserves the redox energy in a proton gradient. This subunit may bind ubiquinone. The protein is NADH-quinone oxidoreductase subunit H of Geobacillus thermodenitrificans (strain NG80-2).